The chain runs to 485 residues: Acyl transferase 1 (485 aa).

His-172 acts as the Proton acceptor in catalysis.

The protein belongs to the plant acyltransferase family. Highly expressed in young panicles. Expressed in leaf sheaths and panicles.

In terms of biological role, involved in defense against pathogens. May contribute to disease resistance by potentiating disease resistance signaling, or producing phytoalexin-like secondary products. The polypeptide is Acyl transferase 1 (Oryza sativa subsp. japonica (Rice)).